A 67-amino-acid polypeptide reads, in one-letter code: Large ribosomal subunit protein uL29 (67 aa).

This sequence belongs to the universal ribosomal protein uL29 family.

The polypeptide is Large ribosomal subunit protein uL29 (Cereibacter sphaeroides (strain ATCC 17025 / ATH 2.4.3) (Rhodobacter sphaeroides)).